The chain runs to 500 residues: Beta-glucosidase 30 (500 aa).

The signal sequence occupies residues 1–25 (MGIRMGRRLLFTLFLGALFCNGVYA). An a beta-D-glucoside-binding site is contributed by Q46. Residues N63 and N114 are each glycosylated (N-linked (GlcNAc...) asparagine). Residues H149 and 194 to 195 (NE) contribute to the a beta-D-glucoside site. Catalysis depends on E195, which acts as the Proton donor. A disulfide bond links C214 and C222. Y338 contributes to the a beta-D-glucoside binding site. N-linked (GlcNAc...) asparagine glycosylation occurs at N363. E409 lines the a beta-D-glucoside pocket. E409 serves as the catalytic Nucleophile. N-linked (GlcNAc...) asparagine glycosylation is found at N416 and N417. A beta-D-glucoside is bound by residues W456, 463-464 (EW), and F472.

This sequence belongs to the glycosyl hydrolase 1 family.

It catalyses the reaction Hydrolysis of terminal, non-reducing beta-D-glucosyl residues with release of beta-D-glucose.. In Oryza sativa subsp. japonica (Rice), this protein is Beta-glucosidase 30 (BGLU30).